The primary structure comprises 392 residues: Chalcone synthase (392 aa).

Cys-165 is a catalytic residue.

It belongs to the thiolase-like superfamily. Chalcone/stilbene synthases family.

It catalyses the reaction (E)-4-coumaroyl-CoA + 3 malonyl-CoA + 3 H(+) = 2',4,4',6'-tetrahydroxychalcone + 3 CO2 + 4 CoA. It functions in the pathway secondary metabolite biosynthesis; flavonoid biosynthesis. In terms of biological role, the primary product of this enzyme is 4,2',4',6'-tetrahydroxychalcone (also termed naringenin-chalcone or chalcone) which can under specific conditions spontaneously isomerize into naringenin. In Persea americana (Avocado), this protein is Chalcone synthase (CHS).